Reading from the N-terminus, the 526-residue chain is Acid-sensing ion channel 1 (526 aa).

Residues M1–C49 are Cytoplasmic-facing. The chain crosses the membrane as a helical span at residues F50 to Q66. The Extracellular portion of the chain corresponds to Y67–E425. Cystine bridges form between C93–C194, C172–C179, C290–C365, C308–C361, C312–C359, C321–C343, and C323–C335. N-linked (GlcNAc...) asparagine glycosylation is found at N366 and N393. The chain crosses the membrane as a discontinuously helical span at residues I426 to Y456. The GAS motif; ion selectivity filter signature appears at G442–S444. Residues E457–C526 lie on the Cytoplasmic side of the membrane. Residue S477 is modified to Phosphoserine; by PKA. S497 carries the phosphoserine modification.

This sequence belongs to the amiloride-sensitive sodium channel (TC 1.A.6) family. ASIC1 subfamily. In terms of assembly, homotrimer. Heterotrimer; with other ASIC proteins producing channel with different properties. Interacts with PICK1; regulates ASIC1 clustering in membranes. Interacts with STOM; alters heterotrimeric ASIC channels activity. PH-gating could be regulated by serine proteases. Post-translationally, phosphorylation by PKA regulates interaction with PICK1 and subcellular localization. Phosphorylation by PKC may regulate the channel. Expressed in brain areas receiving strong excitatory corticofugal input. In hippocampus, expressed in the hilus of the dentate gyrus. In the cerebral cortex expressed in anterior and posterior cingulate cortex, sensory and motor cortices. In the sensory cortex strongest expression is detected in the whisker barrel field. In sensorimotor and cingulate cortex expression is elevated in layer III. Also expressed in basal ganglia, striatum, ventral pallidum, olfactory tubercle, and nucleus accumbens. Weakly expressed in thalamus with the exception of the habenula and the medial septal nuclei. In olfactory bulb, preferentially expressed in the glomerular layer, within glomeruli. Expressed in cerebellum in the molecular and granule cell layers. Strongly expressed in amygdala complex, particularly in the lateral and basolateral nuclei. Isoform 1 is more abundant in brain compared to isoform 2 (at protein level). Expressed in the nodose ganglion and dorsal root ganglion. Expressed in dendritic spine cells.

It localises to the cell membrane. The protein resides in the postsynaptic cell membrane. It is found in the cell projection. Its subcellular location is the dendrite. The catalysed reaction is Na(+)(in) = Na(+)(out). It carries out the reaction Ca(2+)(in) = Ca(2+)(out). The enzyme catalyses K(+)(in) = K(+)(out). It catalyses the reaction Li(+)(in) = Li(+)(out). With respect to regulation, inhibited by the diuretic drug amiloride. Its activity is regulated as follows. The activity of the channel is sensitive to rapid decrease in osmotic pressure. In terms of biological role, forms voltage-independent, pH-gated trimeric sodium channels that act as postsynaptic excitatory receptors in the nervous system, playing a crucial role in regulating synaptic plasticity, learning, and memory. Upon extracellular pH drop this channel elicits transient, fast activating, and completely desensitizing inward currents. Displays high selectivity for sodium ions but can also permit the permeation of other cations. Regulates more or less directly intracellular calcium concentration and CaMKII phosphorylation, and thereby the density of dendritic spines. Modulates neuronal activity in the circuits underlying innate fear. Has high selectivity for sodium ions but is also potentially permeable to other cations including potassium. Could function in cochlear mechanoelectrical transduction. The chain is Acid-sensing ion channel 1 from Mus musculus (Mouse).